Consider the following 157-residue polypeptide: UPF0251 protein CLD_3165 (157 aa).

It belongs to the UPF0251 family.

In Clostridium botulinum (strain Okra / Type B1), this protein is UPF0251 protein CLD_3165.